Here is a 262-residue protein sequence, read N- to C-terminus: Ribosomal RNA small subunit methyltransferase A (262 aa).

N13, L15, G40, E61, D85, and N105 together coordinate S-adenosyl-L-methionine.

This sequence belongs to the class I-like SAM-binding methyltransferase superfamily. rRNA adenine N(6)-methyltransferase family. RsmA subfamily.

The protein resides in the cytoplasm. The catalysed reaction is adenosine(1518)/adenosine(1519) in 16S rRNA + 4 S-adenosyl-L-methionine = N(6)-dimethyladenosine(1518)/N(6)-dimethyladenosine(1519) in 16S rRNA + 4 S-adenosyl-L-homocysteine + 4 H(+). Its function is as follows. Specifically dimethylates two adjacent adenosines (A1518 and A1519) in the loop of a conserved hairpin near the 3'-end of 16S rRNA in the 30S particle. May play a critical role in biogenesis of 30S subunits. This chain is Ribosomal RNA small subunit methyltransferase A, found in Laribacter hongkongensis (strain HLHK9).